The sequence spans 357 residues: UPF0744 protein C106.03 (357 aa).

Residue S282 is modified to Phosphoserine.

It belongs to the UPF0744 family.

It is found in the cytoplasm. This chain is UPF0744 protein C106.03, found in Schizosaccharomyces pombe (strain 972 / ATCC 24843) (Fission yeast).